The primary structure comprises 315 residues: 4-hydroxy-3-methylbut-2-enyl diphosphate reductase (315 aa).

Residue C12 participates in [4Fe-4S] cluster binding. (2E)-4-hydroxy-3-methylbut-2-enyl diphosphate-binding residues include H41 and H74. Dimethylallyl diphosphate is bound by residues H41 and H74. H41 and H74 together coordinate isopentenyl diphosphate. C96 serves as a coordination point for [4Fe-4S] cluster. H124 is a (2E)-4-hydroxy-3-methylbut-2-enyl diphosphate binding site. H124 provides a ligand contact to dimethylallyl diphosphate. H124 is an isopentenyl diphosphate binding site. The Proton donor role is filled by E126. T168 contributes to the (2E)-4-hydroxy-3-methylbut-2-enyl diphosphate binding site. C198 contacts [4Fe-4S] cluster. The (2E)-4-hydroxy-3-methylbut-2-enyl diphosphate site is built by S226, S227, N228, and S270. S226, S227, N228, and S270 together coordinate dimethylallyl diphosphate. S226, S227, N228, and S270 together coordinate isopentenyl diphosphate.

The protein belongs to the IspH family. It depends on [4Fe-4S] cluster as a cofactor.

It catalyses the reaction isopentenyl diphosphate + 2 oxidized [2Fe-2S]-[ferredoxin] + H2O = (2E)-4-hydroxy-3-methylbut-2-enyl diphosphate + 2 reduced [2Fe-2S]-[ferredoxin] + 2 H(+). It carries out the reaction dimethylallyl diphosphate + 2 oxidized [2Fe-2S]-[ferredoxin] + H2O = (2E)-4-hydroxy-3-methylbut-2-enyl diphosphate + 2 reduced [2Fe-2S]-[ferredoxin] + 2 H(+). Its pathway is isoprenoid biosynthesis; dimethylallyl diphosphate biosynthesis; dimethylallyl diphosphate from (2E)-4-hydroxy-3-methylbutenyl diphosphate: step 1/1. It functions in the pathway isoprenoid biosynthesis; isopentenyl diphosphate biosynthesis via DXP pathway; isopentenyl diphosphate from 1-deoxy-D-xylulose 5-phosphate: step 6/6. Catalyzes the conversion of 1-hydroxy-2-methyl-2-(E)-butenyl 4-diphosphate (HMBPP) into a mixture of isopentenyl diphosphate (IPP) and dimethylallyl diphosphate (DMAPP). Acts in the terminal step of the DOXP/MEP pathway for isoprenoid precursor biosynthesis. This chain is 4-hydroxy-3-methylbut-2-enyl diphosphate reductase, found in Pseudomonas syringae pv. syringae (strain B728a).